A 324-amino-acid chain; its full sequence is Beta-ketoacyl-[acyl-carrier-protein] synthase III (324 aa).

Residues Cys-112 and His-251 contribute to the active site. Residues 252-256 (QANLR) are ACP-binding. The active site involves Asn-281.

Belongs to the thiolase-like superfamily. FabH family. Homodimer.

The protein localises to the cytoplasm. The enzyme catalyses malonyl-[ACP] + acetyl-CoA + H(+) = 3-oxobutanoyl-[ACP] + CO2 + CoA. It functions in the pathway lipid metabolism; fatty acid biosynthesis. Catalyzes the condensation reaction of fatty acid synthesis by the addition to an acyl acceptor of two carbons from malonyl-ACP. Catalyzes the first condensation reaction which initiates fatty acid synthesis and may therefore play a role in governing the total rate of fatty acid production. Possesses both acetoacetyl-ACP synthase and acetyl transacylase activities. Its substrate specificity determines the biosynthesis of branched-chain and/or straight-chain of fatty acids. The polypeptide is Beta-ketoacyl-[acyl-carrier-protein] synthase III (Clostridium perfringens (strain 13 / Type A)).